The chain runs to 101 residues: Integration host factor subunit beta (101 aa).

Residues 58 to 101 (ARAGRNPRTGAHVPVDQKSVPFFKTGKEMRERLNRDTGAPDSGA) form a disordered region. A compositionally biased stretch (basic and acidic residues) spans 82–92 (TGKEMRERLNR).

The protein belongs to the bacterial histone-like protein family. In terms of assembly, heterodimer of an alpha and a beta chain.

This protein is one of the two subunits of integration host factor, a specific DNA-binding protein that functions in genetic recombination as well as in transcriptional and translational control. The polypeptide is Integration host factor subunit beta (Rhodopseudomonas palustris (strain BisB18)).